We begin with the raw amino-acid sequence, 489 residues long: Lysine--tRNA ligase (489 aa).

Mg(2+) contacts are provided by Glu399 and Glu406.

The protein belongs to the class-II aminoacyl-tRNA synthetase family. As to quaternary structure, homodimer. Mg(2+) serves as cofactor.

It localises to the cytoplasm. The catalysed reaction is tRNA(Lys) + L-lysine + ATP = L-lysyl-tRNA(Lys) + AMP + diphosphate. The polypeptide is Lysine--tRNA ligase (Synechococcus sp. (strain CC9311)).